The chain runs to 487 residues: Protein FAM221B (487 aa).

Polar residues-rich tracts occupy residues 1–13 and 36–48; these read MEANKTTEGPQDT and HETPLQPSSSQKH. Disordered regions lie at residues 1-103 and 132-289; these read MEAN…QSVT and QLSP…VTSR. Residues 81-103 are compositionally biased toward low complexity; sequence PPVKSSSSGLLSLPPQLSPQSVT. Basic and acidic residues-rich tracts occupy residues 227-236 and 243-253; these read ESEHFPKHSF and AKEDESTKEGE. Ser-248 is modified (phosphoserine).

Belongs to the FAM221 family.

The protein is Protein FAM221B (Fam221b) of Mus musculus (Mouse).